The sequence spans 62 residues: Large ribosomal subunit protein uL29 (62 aa).

The protein belongs to the universal ribosomal protein uL29 family.

This chain is Large ribosomal subunit protein uL29, found in Amoebophilus asiaticus (strain 5a2).